The chain runs to 330 residues: MVPPTINTGKNITTERAVLTLNGLQIKLHKVVGESRDDIVAKMKDLAMDDHKFPRLPGPNPVSIERKDFEKLKQNKYVVSEKTDGIRFMMFFTRVFGFKVCTIIDRAMTVYLLPFKNIPRVLFQGSIFDGELCVDIVEKKFAFVLFDAVVVSGVTVSQMDLASRFFAMKRSLKEFKNVPEDPAILRYKEWIPLEHPTIIKDHLKKANAIYHTDGLIIMSVDEPVIYGRNFNLFKLKPGTHHTIDFIIMSEDGTIGIFDPNLRKNVPVGKLDGYYNKGSIVECGFADGTWKYIQGRSDKNQANDRLTYEKTLLNIEENITIDELLDLFKWE.

The N6-GMP-lysine intermediate role is filled by Lys82.

This sequence belongs to the eukaryotic GTase family. As to quaternary structure, monomer. Mg(2+) is required as a cofactor. Requires Mn(2+) as cofactor.

It carries out the reaction a 5'-end diphospho-ribonucleoside in mRNA + GTP + H(+) = a 5'-end (5'-triphosphoguanosine)-ribonucleoside in mRNA + diphosphate. Functionally, mRNA capping. Transfers a GMP cap onto the end of mRNA that terminates with a 5'-diphosphate tail. This Chlorella (PBCV-1) protein is mRNA-capping enzyme.